We begin with the raw amino-acid sequence, 452 residues long: COBRA-like protein 1 (452 aa).

Positions 1–33 (MGFFLCSSSSIFFKFGISIIFLVSFSGLTPSEA) are cleaved as a signal peptide. Residues N42, N167, N175, N214, N239, N254, N323, N338, and N357 are each glycosylated (N-linked (GlcNAc...) asparagine). A lipid anchor (GPI-anchor amidated serine) is attached at S432. Residues 433 to 452 (VGSLFAAMALLLIVFLHGNL) constitute a propeptide, removed in mature form.

The protein belongs to the COBRA family. As to expression, expressed in roots, stems, leaves, flowers and siliques.

The protein resides in the cell membrane. The protein is COBRA-like protein 1 (COBL1) of Arabidopsis thaliana (Mouse-ear cress).